A 445-amino-acid chain; its full sequence is Phosphoglucosamine mutase (445 aa).

Catalysis depends on S101, which acts as the Phosphoserine intermediate. The Mg(2+) site is built by S101, D240, D242, and D244. S101 carries the post-translational modification Phosphoserine.

Belongs to the phosphohexose mutase family. Mg(2+) serves as cofactor. In terms of processing, activated by phosphorylation.

It carries out the reaction alpha-D-glucosamine 1-phosphate = D-glucosamine 6-phosphate. Its function is as follows. Catalyzes the conversion of glucosamine-6-phosphate to glucosamine-1-phosphate. This Pseudomonas fluorescens (strain Pf0-1) protein is Phosphoglucosamine mutase.